A 396-amino-acid chain; its full sequence is 8-amino-7-oxononanoate synthase (396 aa).

A substrate-binding site is contributed by Arg19. 106–107 serves as a coordination point for pyridoxal 5'-phosphate; that stretch reads GY. His131 provides a ligand contact to substrate. Pyridoxal 5'-phosphate contacts are provided by Ser176, His204, and Thr233. Position 236 is an N6-(pyridoxal phosphate)lysine (Lys236). Thr350 is a binding site for substrate.

Belongs to the class-II pyridoxal-phosphate-dependent aminotransferase family. BioF subfamily. As to quaternary structure, homodimer. Pyridoxal 5'-phosphate serves as cofactor.

The enzyme catalyses 6-carboxyhexanoyl-[ACP] + L-alanine + H(+) = (8S)-8-amino-7-oxononanoate + holo-[ACP] + CO2. Its pathway is cofactor biosynthesis; biotin biosynthesis. In terms of biological role, catalyzes the decarboxylative condensation of pimeloyl-[acyl-carrier protein] and L-alanine to produce 8-amino-7-oxononanoate (AON), [acyl-carrier protein], and carbon dioxide. The chain is 8-amino-7-oxononanoate synthase from Pseudomonas syringae pv. syringae (strain B728a).